A 395-amino-acid chain; its full sequence is Nicotinate phosphoribosyltransferase (395 aa).

His222 carries the phosphohistidine; by autocatalysis modification.

The protein belongs to the NAPRTase family. Transiently phosphorylated on a His residue during the reaction cycle. Phosphorylation strongly increases the affinity for substrates and increases the rate of nicotinate D-ribonucleotide production. Dephosphorylation regenerates the low-affinity form of the enzyme, leading to product release.

It carries out the reaction nicotinate + 5-phospho-alpha-D-ribose 1-diphosphate + ATP + H2O = nicotinate beta-D-ribonucleotide + ADP + phosphate + diphosphate. Its pathway is cofactor biosynthesis; NAD(+) biosynthesis; nicotinate D-ribonucleotide from nicotinate: step 1/1. Catalyzes the synthesis of beta-nicotinate D-ribonucleotide from nicotinate and 5-phospho-D-ribose 1-phosphate at the expense of ATP. This Polaromonas sp. (strain JS666 / ATCC BAA-500) protein is Nicotinate phosphoribosyltransferase.